Consider the following 1462-residue polypeptide: Trifunctional nucleotide phosphoesterase protein YfkN (1462 aa).

An N-terminal signal peptide occupies residues 1 to 35 (MRIQKRRTHVENILRILLPPIMILSLILPTPPIHA). Residues 36–623 (EESAAPQVHL…GTNLTFESSL (588 aa)) are 2',3'-cyclic nucleotide 2'-phosphodiesterase/3'-nucleotidase. Aspartate 52, histidine 54, aspartate 97, asparagine 141, histidine 249, histidine 282, and histidine 284 together coordinate a divalent metal cation. A ribonucleoside 3'-phosphate is bound by residues tyrosine 458 and 561 to 567 (YRASGGG). The tract at residues 624–1427 (LAKPFADKAD…GPAGGLLPDT (804 aa)) is 5'-nucleotidase. Residues aspartate 676, histidine 678, aspartate 708, asparagine 740, histidine 872, histidine 895, and histidine 897 each contribute to the a divalent metal cation site. Residues phenylalanine 1047 and 1127 to 1133 (FVGAGGD) each bind a ribonucleoside 5'-phosphate. The tract at residues 1350-1422 (ILNSGSNNKP…GSGTDGPAGG (73 aa)) is disordered. Over residues 1405 to 1421 (GSGGNGSGGSGTDGPAG) the composition is skewed to gly residues. An LPXTG sorting signal motif is present at residues 1424 to 1428 (LPDTA). Threonine 1427 is subject to Pentaglycyl murein peptidoglycan amidated threonine. Residues 1428–1462 (ATSMYSILLAGFLISALGTAMYLHQRRKQNRANQA) constitute a propeptide, removed by sortase.

This sequence belongs to the 5'-nucleotidase family. A divalent metal cation is required as a cofactor.

The protein localises to the secreted. It localises to the cell wall. The enzyme catalyses a nucleoside 2',3'-cyclic phosphate + H2O = a nucleoside 3'-phosphate + H(+). The catalysed reaction is a ribonucleoside 3'-phosphate + H2O = a ribonucleoside + phosphate. It carries out the reaction a ribonucleoside 5'-phosphate + H2O = a ribonucleoside + phosphate. Its function is as follows. Catalyzes the release of inorganic phosphate from 2',3'-cyclic nucleotides through consecutive 2',3'-phosphodiesterase and 3'- (or 2') nucleotidase activities. Also possesses a 5'-nucleotidase activity. Does not catalyze the release of inorganic phosphate from 3',5'-cyclic nucleotides. Probably plays a role in the cellular reprocessing of nucleotides present in the medium, under conditions of phosphate shortage. This chain is Trifunctional nucleotide phosphoesterase protein YfkN (yfkN), found in Bacillus subtilis (strain 168).